The sequence spans 363 residues: Jasmonate-induced oxygenase 3 (363 aa).

Positions 210 to 312 constitute a Fe2OG dioxygenase domain; the sequence is ESGGCLRVNY…RLSLAFFYNP (103 aa). Residue Arg-216 coordinates jasmonate. 2-oxoglutarate is bound by residues Asn-218 and Tyr-220. Fe cation contacts are provided by His-235, Asp-237, and His-293. Positions 303 and 305 each coordinate 2-oxoglutarate. Jasmonate contacts are provided by Arg-342 and Arg-346.

Belongs to the iron/ascorbate-dependent oxidoreductase family. It depends on L-ascorbate as a cofactor. Requires Fe(2+) as cofactor.

The catalysed reaction is jasmonate + 2-oxoglutarate + O2 = (1R,2R)-12-hydroxyjasmonate + succinate + CO2. 2-oxoglutarate-dependent dioxygenase involved in the oxidation of jasmonate (JA), a stress-induced phytohormone synthesized in response to attack by pathogens and herbivores, which triggers the activation of defense responses via the JA-mediated signaling pathway. Converts JA to 12-hydroxyjasmonate (12OH-JA), an inactive form of JA. Is specific to free JA, and cannot oxidize the bioactive form jasmonoyl-L-isoleucine (JA-Ile) or other JA-amino acid conjugates. Prevents over-accumulation of JA and indirectly its bioactive form JA-Ile under stress response. Acts as a negative regulator of JA-mediated defense signaling, by contributing to 12OH-JA accumulation, which represses JA defense responses upon infection by the fungal pathogen Botrytis cinerea. Acts as a negative regulator of JA-mediated defense responses upon infestation by the herbivorous caterpillar Mamestra brassicae. The sequence is that of Jasmonate-induced oxygenase 3 from Arabidopsis thaliana (Mouse-ear cress).